A 227-amino-acid polypeptide reads, in one-letter code: Type II restriction enzyme HhaII (227 aa).

In terms of assembly, homodimer.

It carries out the reaction Endonucleolytic cleavage of DNA to give specific double-stranded fragments with terminal 5'-phosphates.. A P subtype restriction enzyme that recognizes the double-stranded sequence 5'-GANTC-3' and cleaves after G-1. This is Type II restriction enzyme HhaII (hhaIIR) from Haemophilus parahaemolyticus.